A 218-amino-acid chain; its full sequence is Octanoyltransferase (218 aa).

In terms of domain architecture, BPL/LPL catalytic spans 31–206; it reads REAADEVWLV…QLVKHLDYAE (176 aa). Residues 70 to 77, 137 to 139, and 150 to 152 each bind substrate; these read RGGQVTYH, SLG, and GLA. Cys-168 serves as the catalytic Acyl-thioester intermediate.

This sequence belongs to the LipB family.

Its subcellular location is the cytoplasm. The catalysed reaction is octanoyl-[ACP] + L-lysyl-[protein] = N(6)-octanoyl-L-lysyl-[protein] + holo-[ACP] + H(+). It participates in protein modification; protein lipoylation via endogenous pathway; protein N(6)-(lipoyl)lysine from octanoyl-[acyl-carrier-protein]: step 1/2. Its function is as follows. Catalyzes the transfer of endogenously produced octanoic acid from octanoyl-acyl-carrier-protein onto the lipoyl domains of lipoate-dependent enzymes. Lipoyl-ACP can also act as a substrate although octanoyl-ACP is likely to be the physiological substrate. The sequence is that of Octanoyltransferase from Pseudomonas syringae pv. syringae (strain B728a).